The chain runs to 265 residues: MLPGRHTPRRADAAAAAAAMEPLVPGATRAALSEFVATAVFVFAAEGSVYGLWKMYRDTGTLGGLLVVAVAHALALAAAVAVSRNASGGHVNPAVTFGVLVGRRISFARAALYWAAQLLGAVLAVLLLRLASGGMRPMGFTLGHRIHERHALLLEVVMTFGLVYTVYATAVDRRSGGGDIAPLAIGLVAGANILAGGPFDGAAMNPARAFGPALVGWNWRHHWVYWLGPLIGAGMAGALYEFVMAEQPEPPAAADTRLPVAAEDY.

Helical transmembrane passes span Leu-32–Leu-52 and Leu-62–Val-82. The NPA 1 motif lies at Asn-92–Ala-94. The next 3 membrane-spanning stretches (helical) occupy residues Ala-110–Leu-130, Ala-151–Val-171, and Asp-179–Phe-199. An NPA 2 motif is present at residues Asn-205–Ala-207. Residues Trp-223–Val-243 form a helical membrane-spanning segment.

The protein belongs to the MIP/aquaporin (TC 1.A.8) family. TIP (TC 1.A.8.10) subfamily. In terms of tissue distribution, expressed in leaves and at lower levels in roots.

It is found in the vacuole membrane. Its function is as follows. Aquaporins facilitate the transport of water and small neutral solutes across cell membranes. May be involved in transport from the vacuolar compartment to the cytoplasm. This is Probable aquaporin TIP3-2 (TIP3-2) from Oryza sativa subsp. japonica (Rice).